Here is a 202-residue protein sequence, read N- to C-terminus: Superoxide dismutase [Mn/Fe] (202 aa).

4 residues coordinate Fe(3+): His-27, His-81, Asp-163, and His-167. Mn(2+)-binding residues include His-27, His-81, Asp-163, and His-167.

The protein belongs to the iron/manganese superoxide dismutase family. Requires Mn(2+) as cofactor. Fe(3+) serves as cofactor.

It catalyses the reaction 2 superoxide + 2 H(+) = H2O2 + O2. Destroys superoxide anion radicals which are normally produced within the cells and which are toxic to biological systems. Catalyzes the dismutation of superoxide anion radicals into O2 and H2O2 by successive reduction and oxidation of the transition metal ion at the active site. This is Superoxide dismutase [Mn/Fe] (sodA) from Streptococcus agalactiae serotype V (strain ATCC BAA-611 / 2603 V/R).